The sequence spans 251 residues: Triosephosphate isomerase (251 aa).

9–11 (NWK) lines the substrate pocket. His-95 acts as the Electrophile in catalysis. Glu-167 (proton acceptor) is an active-site residue. Substrate-binding positions include Gly-173, Ser-212, and 233–234 (GG).

This sequence belongs to the triosephosphate isomerase family. In terms of assembly, homodimer.

The protein resides in the cytoplasm. The enzyme catalyses D-glyceraldehyde 3-phosphate = dihydroxyacetone phosphate. It functions in the pathway carbohydrate biosynthesis; gluconeogenesis. It participates in carbohydrate degradation; glycolysis; D-glyceraldehyde 3-phosphate from glycerone phosphate: step 1/1. Involved in the gluconeogenesis. Catalyzes stereospecifically the conversion of dihydroxyacetone phosphate (DHAP) to D-glyceraldehyde-3-phosphate (G3P). The sequence is that of Triosephosphate isomerase from Pseudomonas syringae pv. tomato (strain ATCC BAA-871 / DC3000).